The primary structure comprises 539 residues: uncharacterized protein (539 aa).

Catalysis depends on serine 216, which acts as the Acyl-ester intermediate.

Belongs to the type-B carboxylesterase/lipase family.

Its subcellular location is the cytoplasm. It localises to the nucleus. This is an uncharacterized protein from Schizosaccharomyces pombe (strain 972 / ATCC 24843) (Fission yeast).